We begin with the raw amino-acid sequence, 190 residues long: Orotate phosphoribosyltransferase (190 aa).

A 5-phospho-alpha-D-ribose 1-diphosphate-binding site is contributed by 114–122 (EDVVTTGGS). The orotate site is built by T118 and R146.

This sequence belongs to the purine/pyrimidine phosphoribosyltransferase family. PyrE subfamily. Homodimer. Mg(2+) serves as cofactor.

The enzyme catalyses orotidine 5'-phosphate + diphosphate = orotate + 5-phospho-alpha-D-ribose 1-diphosphate. Its pathway is pyrimidine metabolism; UMP biosynthesis via de novo pathway; UMP from orotate: step 1/2. In terms of biological role, catalyzes the transfer of a ribosyl phosphate group from 5-phosphoribose 1-diphosphate to orotate, leading to the formation of orotidine monophosphate (OMP). The protein is Orotate phosphoribosyltransferase of Thermoanaerobacter sp. (strain X514).